The chain runs to 381 residues: Sterol 24-C-methyltransferase ERG6A (381 aa).

Belongs to the class I-like SAM-binding methyltransferase superfamily. Erg6/SMT family.

The enzyme catalyses lanosterol + S-adenosyl-L-methionine = eburicol + S-adenosyl-L-homocysteine + H(+). It functions in the pathway steroid metabolism; ergosterol biosynthesis. Sterol 24-C-methyltransferase; part of the third module of ergosterol biosynthesis pathway that includes the late steps of the pathway. ERG6A and ERG6B methylate lanosterol at C-24 to produce eburicol. The third module or late pathway involves the ergosterol synthesis itself through consecutive reactions that mainly occur in the endoplasmic reticulum (ER) membrane. Firstly, the squalene synthase ERG9 catalyzes the condensation of 2 farnesyl pyrophosphate moieties to form squalene, which is the precursor of all steroids. Squalene synthase is crucial for balancing the incorporation of farnesyl diphosphate (FPP) into sterol and nonsterol isoprene synthesis. Secondly, squalene is converted into lanosterol by the consecutive action of the squalene epoxidase ERG1 and the lanosterol synthase ERG7. Then, the delta(24)-sterol C-methyltransferase ERG6 methylates lanosterol at C-24 to produce eburicol. Eburicol is the substrate of the sterol 14-alpha demethylase encoded by CYP51A, CYP51B and CYP51C, to yield 4,4,24-trimethyl ergosta-8,14,24(28)-trienol. CYP51B encodes the enzyme primarily responsible for sterol 14-alpha-demethylation, and plays an essential role in ascospore formation. CYP51A encodes an additional sterol 14-alpha-demethylase, induced on ergosterol depletion and responsible for the intrinsic variation in azole sensitivity. The third CYP51 isoform, CYP51C, does not encode a sterol 14-alpha-demethylase, but is required for full virulence on host wheat ears. The C-14 reductase ERG24 then reduces the C14=C15 double bond which leads to 4,4-dimethylfecosterol. A sequence of further demethylations at C-4, involving the C-4 demethylation complex containing the C-4 methylsterol oxidases ERG25, the sterol-4-alpha-carboxylate 3-dehydrogenase ERG26 and the 3-keto-steroid reductase ERG27, leads to the production of fecosterol via 4-methylfecosterol. ERG28 has a role as a scaffold to help anchor ERG25, ERG26 and ERG27 to the endoplasmic reticulum. The C-8 sterol isomerase ERG2 then catalyzes the reaction which results in unsaturation at C-7 in the B ring of sterols and thus converts fecosterol to episterol. The sterol-C5-desaturases ERG3A and ERG3BB then catalyze the introduction of a C-5 double bond in the B ring to produce 5-dehydroepisterol. The C-22 sterol desaturases ERG5A and ERG5B further convert 5-dehydroepisterol into ergosta-5,7,22,24(28)-tetraen-3beta-ol by forming the C-22(23) double bond in the sterol side chain. Finally, ergosta-5,7,22,24(28)-tetraen-3beta-ol is substrate of the C-24(28) sterol reductase ERG4 to produce ergosterol. The sequence is that of Sterol 24-C-methyltransferase ERG6A (FG02783.1) from Gibberella zeae (strain ATCC MYA-4620 / CBS 123657 / FGSC 9075 / NRRL 31084 / PH-1) (Wheat head blight fungus).